Reading from the N-terminus, the 61-residue chain is Copper metallothionein 1-1 (61 aa).

The propeptide occupies 1-8 (MFSELINF). Cu cation contacts are provided by C15, C17, C19, C22, and C28. K30 participates in a covalent cross-link: Glycyl lysine isopeptide (Lys-Gly) (interchain with G-Cter in ubiquitin). Cu cation is bound by residues C32, C34, C38, C44, and C46. The tract at residues 37-61 (GCNSDDKCPCGNKSEETKKSCCSGK) is disordered. Over residues 40-55 (SDDKCPCGNKSEETKK) the composition is skewed to basic and acidic residues.

The protein belongs to the metallothionein superfamily. Type 12 family.

In terms of biological role, protects the cell against copper toxicity by tightly chelating copper ions. May also act as a depository for copper designated for the effective transfer into the apo forms of copper proteins. The protein is Copper metallothionein 1-1 (CUP1-1) of Saccharomyces cerevisiae (strain ATCC 204508 / S288c) (Baker's yeast).